We begin with the raw amino-acid sequence, 257 residues long: Thiazole synthase (257 aa).

The Schiff-base intermediate with DXP role is filled by Lys-96. 1-deoxy-D-xylulose 5-phosphate-binding positions include Gly-157, 184-185, and 206-207; these read AG and NT.

This sequence belongs to the ThiG family. As to quaternary structure, homotetramer. Forms heterodimers with either ThiH or ThiS.

The protein resides in the cytoplasm. It catalyses the reaction [ThiS sulfur-carrier protein]-C-terminal-Gly-aminoethanethioate + 2-iminoacetate + 1-deoxy-D-xylulose 5-phosphate = [ThiS sulfur-carrier protein]-C-terminal Gly-Gly + 2-[(2R,5Z)-2-carboxy-4-methylthiazol-5(2H)-ylidene]ethyl phosphate + 2 H2O + H(+). The protein operates within cofactor biosynthesis; thiamine diphosphate biosynthesis. Functionally, catalyzes the rearrangement of 1-deoxy-D-xylulose 5-phosphate (DXP) to produce the thiazole phosphate moiety of thiamine. Sulfur is provided by the thiocarboxylate moiety of the carrier protein ThiS. In vitro, sulfur can be provided by H(2)S. The sequence is that of Thiazole synthase from Agrobacterium fabrum (strain C58 / ATCC 33970) (Agrobacterium tumefaciens (strain C58)).